A 143-amino-acid polypeptide reads, in one-letter code: Large ribosomal subunit protein uL11 (143 aa).

Belongs to the universal ribosomal protein uL11 family. In terms of assembly, part of the ribosomal stalk of the 50S ribosomal subunit. Interacts with L10 and the large rRNA to form the base of the stalk. L10 forms an elongated spine to which L12 dimers bind in a sequential fashion forming a multimeric L10(L12)X complex. One or more lysine residues are methylated.

In terms of biological role, forms part of the ribosomal stalk which helps the ribosome interact with GTP-bound translation factors. The polypeptide is Large ribosomal subunit protein uL11 (Paraburkholderia phytofirmans (strain DSM 17436 / LMG 22146 / PsJN) (Burkholderia phytofirmans)).